A 144-amino-acid polypeptide reads, in one-letter code: Cytochrome c oxidase subunit 4 isoform 1, mitochondrial (144 aa).

Residues 1 to 73 (SVVKSEDFSL…SFAEMNRGSN (73 aa)) lie on the Mitochondrial matrix side of the membrane. An N6-acetyllysine; alternate modification is found at Lys4. Position 4 is an N6-succinyllysine; alternate (Lys4). Lys28 carries the N6-acetyllysine modification. 2 positions are modified to phosphoserine: Ser31 and Ser33. The residue at position 35 (Lys35) is an N6-acetyllysine; alternate. Position 35 is an N6-succinyllysine; alternate (Lys35). An N6-acetyllysine modification is found at Lys42. Residues 74 to 99 (EWKTVVGGAMFFIGFTALIIMWQKHY) form a helical membrane-spanning segment. The Mitochondrial intermembrane segment spans residues 100-144 (VYGPLPQTFDKEWVGKQTKRMLDMKVNPIQGLASKWDYEKNEWKK).

This sequence belongs to the cytochrome c oxidase IV family. Component of the cytochrome c oxidase (complex IV, CIV), a multisubunit enzyme composed of 14 subunits. The complex is composed of a catalytic core of 3 subunits MT-CO1, MT-CO2 and MT-CO3, encoded in the mitochondrial DNA, and 11 supernumerary subunits COX4I, COX5A, COX5B, COX6A, COX6B, COX6C, COX7A, COX7B, COX7C, COX8 and NDUFA4, which are encoded in the nuclear genome. The complex exists as a monomer or a dimer and forms supercomplexes (SCs) in the inner mitochondrial membrane with NADH-ubiquinone oxidoreductase (complex I, CI) and ubiquinol-cytochrome c oxidoreductase (cytochrome b-c1 complex, complex III, CIII), resulting in different assemblies (supercomplex SCI(1)III(2)IV(1) and megacomplex MCI(2)III(2)IV(2)). Interacts with PHB2; the interaction decreases in absence of SPHK2. Interacts with AFG1L. Interacts with ABCB7; this interaction allows the regulation of cellular iron homeostasis and cellular reactive oxygen species (ROS) levels in cardiomyocytes. Interacts with FLVCR2; this interaction occurs in the absence of heme and is disrupted upon heme binding. Interacts with IRGC.

The protein resides in the mitochondrion inner membrane. The protein operates within energy metabolism; oxidative phosphorylation. Component of the cytochrome c oxidase, the last enzyme in the mitochondrial electron transport chain which drives oxidative phosphorylation. The respiratory chain contains 3 multisubunit complexes succinate dehydrogenase (complex II, CII), ubiquinol-cytochrome c oxidoreductase (cytochrome b-c1 complex, complex III, CIII) and cytochrome c oxidase (complex IV, CIV), that cooperate to transfer electrons derived from NADH and succinate to molecular oxygen, creating an electrochemical gradient over the inner membrane that drives transmembrane transport and the ATP synthase. Cytochrome c oxidase is the component of the respiratory chain that catalyzes the reduction of oxygen to water. Electrons originating from reduced cytochrome c in the intermembrane space (IMS) are transferred via the dinuclear copper A center (CU(A)) of subunit 2 and heme A of subunit 1 to the active site in subunit 1, a binuclear center (BNC) formed by heme A3 and copper B (CU(B)). The BNC reduces molecular oxygen to 2 water molecules using 4 electrons from cytochrome c in the IMS and 4 protons from the mitochondrial matrix. This Hylobates agilis (Agile gibbon) protein is Cytochrome c oxidase subunit 4 isoform 1, mitochondrial (COX4I1).